We begin with the raw amino-acid sequence, 314 residues long: Acetaldehyde dehydrogenase (314 aa).

Residue 15–18 participates in NAD(+) binding; that stretch reads SGNI. The active-site Acyl-thioester intermediate is the cysteine 133. NAD(+) contacts are provided by residues 164–172 and asparagine 292; that span reads SAGPGTRAN.

The protein belongs to the acetaldehyde dehydrogenase family.

The catalysed reaction is acetaldehyde + NAD(+) + CoA = acetyl-CoA + NADH + H(+). This is Acetaldehyde dehydrogenase from Paraburkholderia phytofirmans (strain DSM 17436 / LMG 22146 / PsJN) (Burkholderia phytofirmans).